Consider the following 120-residue polypeptide: Large ribosomal subunit protein uL18 (120 aa).

The tract at residues Met-1–Gly-22 is disordered. A compositionally biased stretch (basic residues) spans Ala-8–Ile-20.

The protein belongs to the universal ribosomal protein uL18 family. In terms of assembly, part of the 50S ribosomal subunit; part of the 5S rRNA/L5/L18/L25 subcomplex. Contacts the 5S and 23S rRNAs.

Its function is as follows. This is one of the proteins that bind and probably mediate the attachment of the 5S RNA into the large ribosomal subunit, where it forms part of the central protuberance. The polypeptide is Large ribosomal subunit protein uL18 (Gloeobacter violaceus (strain ATCC 29082 / PCC 7421)).